The chain runs to 66 residues: Large ribosomal subunit protein bL33 (66 aa).

Belongs to the bacterial ribosomal protein bL33 family.

This is Large ribosomal subunit protein bL33 from Synechococcus sp. (strain CC9902).